We begin with the raw amino-acid sequence, 311 residues long: Pyrimidine-specific ribonucleoside hydrolase RihA (311 aa).

Residue His-240 is part of the active site.

This sequence belongs to the IUNH family. RihA subfamily.

Hydrolyzes cytidine or uridine to ribose and cytosine or uracil, respectively. In Salmonella schwarzengrund (strain CVM19633), this protein is Pyrimidine-specific ribonucleoside hydrolase RihA.